We begin with the raw amino-acid sequence, 412 residues long: Proteasome-activating nucleotidase (412 aa).

Residues 15-72 (EDLYRYLLERVTNLEDRNTELREQLRQIEADKRYLETQKVRYEREVRKFKGEIEQMKS) are a coiled coil. ATP is bound by residues 197–202 (GTGKTL) and histidine 336. Positions 410–412 (MFA) are docks into pockets in the proteasome alpha-ring to cause gate opening.

It belongs to the AAA ATPase family. In terms of assembly, homohexamer. The hexameric complex has a two-ring architecture resembling a top hat that caps the 20S proteasome core at one or both ends. Upon ATP-binding, the C-terminus of PAN interacts with the alpha-rings of the proteasome core by binding to the intersubunit pockets.

It localises to the cytoplasm. In terms of biological role, ATPase which is responsible for recognizing, binding, unfolding and translocation of substrate proteins into the archaeal 20S proteasome core particle. Is essential for opening the gate of the 20S proteasome via an interaction with its C-terminus, thereby allowing substrate entry and access to the site of proteolysis. Thus, the C-termini of the proteasomal ATPase function like a 'key in a lock' to induce gate opening and therefore regulate proteolysis. Unfolding activity requires energy from ATP hydrolysis, whereas ATP binding alone promotes ATPase-20S proteasome association which triggers gate opening, and supports translocation of unfolded substrates. The polypeptide is Proteasome-activating nucleotidase (Methanosphaerula palustris (strain ATCC BAA-1556 / DSM 19958 / E1-9c)).